A 590-amino-acid polypeptide reads, in one-letter code: Probable metalloendopeptidase G1-type (590 aa).

His-41 contributes to the Zn(2+) binding site. The active site involves Glu-44. His-45 is a binding site for Zn(2+).

This sequence belongs to the peptidase M44 family. Requires Zn(2+) as cofactor.

Seems to be involved in viral proteins maturation by cleavage at Ala-Gly-|-Xaa motifs. This Oryctolagus cuniculus (Rabbit) protein is Probable metalloendopeptidase G1-type (GP045L).